Reading from the N-terminus, the 373-residue chain is GTPase-activating protein gyp10 (373 aa).

Positions 35–220 (FLMKSLRKSV…RLFDFFISSH (186 aa)) constitute a Rab-GAP TBC domain. A helical membrane pass occupies residues 343–363 (IFNGCNMLAAITVIGIGIVAS).

Its subcellular location is the endoplasmic reticulum membrane. Has a role in vesicular trafficking and septation during cytokinesis. This is GTPase-activating protein gyp10 (gyp10) from Schizosaccharomyces pombe (strain 972 / ATCC 24843) (Fission yeast).